Here is a 524-residue protein sequence, read N- to C-terminus: Probable cytochrome P450 12c1, mitochondrial (524 aa).

Residue cysteine 470 participates in heme binding.

It belongs to the cytochrome P450 family. Heme serves as cofactor.

It is found in the mitochondrion membrane. This chain is Probable cytochrome P450 12c1, mitochondrial (Cyp12c1), found in Drosophila melanogaster (Fruit fly).